Reading from the N-terminus, the 859-residue chain is Probable helicase A859L (859 aa).

The Helicase ATP-binding domain occupies Y178–A349. An ATP-binding site is contributed by M191–T198. The DEAH box signature appears at D298–H301. The Helicase C-terminal domain occupies Q394 to S553.

Belongs to the asfivirus helicase A859L family.

This African swine fever virus (isolate Pig/Kenya/KEN-50/1950) (ASFV) protein is Probable helicase A859L.